Here is a 310-residue protein sequence, read N- to C-terminus: Glycerol-3-phosphate dehydrogenase [NAD(P)+] (310 aa).

Trp-19, Arg-39, Arg-40, and Lys-87 together coordinate NADPH. Sn-glycerol 3-phosphate-binding residues include Lys-87 and Gly-115. Ser-119 contacts NADPH. Sn-glycerol 3-phosphate contacts are provided by Lys-170, Asp-223, Ser-233, Arg-234, and Asn-235. Lys-170 acts as the Proton acceptor in catalysis. Arg-234 contacts NADPH. Position 260 (Glu-260) interacts with NADPH.

The protein belongs to the NAD-dependent glycerol-3-phosphate dehydrogenase family.

It localises to the cytoplasm. The catalysed reaction is sn-glycerol 3-phosphate + NAD(+) = dihydroxyacetone phosphate + NADH + H(+). It catalyses the reaction sn-glycerol 3-phosphate + NADP(+) = dihydroxyacetone phosphate + NADPH + H(+). Its pathway is membrane lipid metabolism; glycerophospholipid metabolism. In terms of biological role, catalyzes the reduction of the glycolytic intermediate dihydroxyacetone phosphate (DHAP) to sn-glycerol 3-phosphate (G3P), the key precursor for phospholipid synthesis. The protein is Glycerol-3-phosphate dehydrogenase [NAD(P)+] of Synechococcus sp. (strain JA-3-3Ab) (Cyanobacteria bacterium Yellowstone A-Prime).